Reading from the N-terminus, the 350-residue chain is Flap endonuclease 1 (350 aa).

The N-domain stretch occupies residues 1–101 (MGVNIREVIP…LEIERRKRVK (101 aa)). Mg(2+) is bound by residues Asp30, Asp83, Glu155, Glu157, Asp176, Asp178, and Asp239. Residues 119–261 (AARRYAQMAA…TALKMVKAHR (143 aa)) form an I-domain region. The tract at residues 340 to 348 (QQMGLDAWL) is interaction with PCNA.

This sequence belongs to the XPG/RAD2 endonuclease family. FEN1 subfamily. In terms of assembly, interacts with PCNA. PCNA stimulates the nuclease activity without altering cleavage specificity. It depends on Mg(2+) as a cofactor.

In terms of biological role, structure-specific nuclease with 5'-flap endonuclease and 5'-3' exonuclease activities involved in DNA replication and repair. During DNA replication, cleaves the 5'-overhanging flap structure that is generated by displacement synthesis when DNA polymerase encounters the 5'-end of a downstream Okazaki fragment. Binds the unpaired 3'-DNA end and kinks the DNA to facilitate 5' cleavage specificity. Cleaves one nucleotide into the double-stranded DNA from the junction in flap DNA, leaving a nick for ligation. Also involved in the base excision repair (BER) pathway. Acts as a genome stabilization factor that prevents flaps from equilibrating into structures that lead to duplications and deletions. Also possesses 5'-3' exonuclease activity on nicked or gapped double-stranded DNA. This Hyperthermus butylicus (strain DSM 5456 / JCM 9403 / PLM1-5) protein is Flap endonuclease 1.